The chain runs to 345 residues: Protein lifeguard 1 (345 aa).

The segment at 1–115 is disordered; sequence MSHEKSFLVS…GNYQEEGPPS (115 aa). Composition is skewed to pro residues over residues 24–46 and 79–98; these read APMP…PFQP and GPYP…PPFQ. 7 helical membrane-spanning segments follow: residues 139–159, 171–191, 202–222, 227–247, 257–277, 281–301, and 320–340; these read VFLV…IFTF, VWTY…LSCC, LVAL…IASF, AVIM…IFSM, MGVL…CIFI, ILEI…LAVD, and FAAL…LTII.

It belongs to the BI1 family. LFG subfamily.

It localises to the membrane. In terms of biological role, potential apoptotic regulator. This Mus musculus (Mouse) protein is Protein lifeguard 1 (Grina).